We begin with the raw amino-acid sequence, 365 residues long: Alanine racemase (365 aa).

The active-site Proton acceptor; specific for D-alanine is the Lys36. Lys36 is modified (N6-(pyridoxal phosphate)lysine). Arg132 serves as a coordination point for substrate. Tyr257 acts as the Proton acceptor; specific for L-alanine in catalysis. Met305 serves as a coordination point for substrate.

Belongs to the alanine racemase family. Pyridoxal 5'-phosphate is required as a cofactor.

It carries out the reaction L-alanine = D-alanine. It participates in amino-acid biosynthesis; D-alanine biosynthesis; D-alanine from L-alanine: step 1/1. Functionally, catalyzes the interconversion of L-alanine and D-alanine. May also act on other amino acids. This is Alanine racemase (alr) from Xylella fastidiosa (strain Temecula1 / ATCC 700964).